The following is an 895-amino-acid chain: Protein translocase subunit SecA (895 aa).

ATP contacts are provided by residues glutamine 86, glycine 104–threonine 108, and aspartate 494. Low complexity-rich tracts occupy residues alanine 838–proline 849 and glycine 870–arginine 882. A disordered region spans residues alanine 838–valine 895.

Belongs to the SecA family. In terms of assembly, monomer and homodimer. Part of the essential Sec protein translocation apparatus which comprises SecA, SecYEG and auxiliary proteins SecDF. Other proteins may also be involved.

The protein localises to the cell membrane. It localises to the cytoplasm. The catalysed reaction is ATP + H2O + cellular proteinSide 1 = ADP + phosphate + cellular proteinSide 2.. Its function is as follows. Part of the Sec protein translocase complex. Interacts with the SecYEG preprotein conducting channel. Has a central role in coupling the hydrolysis of ATP to the transfer of proteins into and across the cell membrane, serving as an ATP-driven molecular motor driving the stepwise translocation of polypeptide chains across the membrane. This Kineococcus radiotolerans (strain ATCC BAA-149 / DSM 14245 / SRS30216) protein is Protein translocase subunit SecA.